A 91-amino-acid polypeptide reads, in one-letter code: Early E3B 10.4 kDa protein (91 aa).

The first 22 residues, Met1–Thr22, serve as a signal peptide directing secretion. Topologically, residues Ala23–Pro34 are lumenal. Residues Phe35 to Phe60 form a helical membrane-spanning segment. Residues Gln61–Ile91 lie on the Cytoplasmic side of the membrane.

Belongs to the adenoviridae E3B family.

The protein localises to the host endoplasmic reticulum membrane. Its function is as follows. Down-regulates the EGF receptor. This is Early E3B 10.4 kDa protein from Homo sapiens (Human).